We begin with the raw amino-acid sequence, 431 residues long: tRNA(Ile)-lysidine synthase (431 aa).

19–24 (STGIDS) is an ATP binding site.

This sequence belongs to the tRNA(Ile)-lysidine synthase family.

It is found in the cytoplasm. It carries out the reaction cytidine(34) in tRNA(Ile2) + L-lysine + ATP = lysidine(34) in tRNA(Ile2) + AMP + diphosphate + H(+). Its function is as follows. Ligates lysine onto the cytidine present at position 34 of the AUA codon-specific tRNA(Ile) that contains the anticodon CAU, in an ATP-dependent manner. Cytidine is converted to lysidine, thus changing the amino acid specificity of the tRNA from methionine to isoleucine. The sequence is that of tRNA(Ile)-lysidine synthase from Staphylococcus aureus (strain COL).